The primary structure comprises 273 residues: Dermonecrotic toxin LapSicTox-alphaIB2 (273 aa).

H5 is an active-site residue. Residues E25 and D27 each coordinate Mg(2+). Catalysis depends on H41, which acts as the Nucleophile. 2 cysteine pairs are disulfide-bonded: C45–C51 and C47–C190. D85 serves as a coordination point for Mg(2+). Residue N250 is glycosylated (N-linked (GlcNAc...) asparagine).

This sequence belongs to the arthropod phospholipase D family. Class II subfamily. It depends on Mg(2+) as a cofactor. As to expression, expressed by the venom gland.

It is found in the secreted. It carries out the reaction an N-(acyl)-sphingosylphosphocholine = an N-(acyl)-sphingosyl-1,3-cyclic phosphate + choline. The catalysed reaction is an N-(acyl)-sphingosylphosphoethanolamine = an N-(acyl)-sphingosyl-1,3-cyclic phosphate + ethanolamine. It catalyses the reaction a 1-acyl-sn-glycero-3-phosphocholine = a 1-acyl-sn-glycero-2,3-cyclic phosphate + choline. The enzyme catalyses a 1-acyl-sn-glycero-3-phosphoethanolamine = a 1-acyl-sn-glycero-2,3-cyclic phosphate + ethanolamine. In terms of biological role, dermonecrotic toxins cleave the phosphodiester linkage between the phosphate and headgroup of certain phospholipids (sphingolipid and lysolipid substrates), forming an alcohol (often choline) and a cyclic phosphate. This toxin acts on sphingomyelin (SM). It may also act on ceramide phosphoethanolamine (CPE), lysophosphatidylcholine (LPC) and lysophosphatidylethanolamine (LPE), but not on lysophosphatidylserine (LPS), and lysophosphatidylglycerol (LPG). It acts by transphosphatidylation, releasing exclusively cyclic phosphate products as second products. Induces dermonecrosis, hemolysis, increased vascular permeability, edema, inflammatory response, and platelet aggregation. This Loxosceles apachea (Apache recluse spider) protein is Dermonecrotic toxin LapSicTox-alphaIB2.